The following is a 210-amino-acid chain: Large ribosomal subunit protein uL3 (210 aa).

The tract at residues 133–156 is disordered; the sequence is ASHGNSLSHRVPGSIGQNQTPGKV. An N5-methylglutamine modification is found at Q151.

Belongs to the universal ribosomal protein uL3 family. As to quaternary structure, part of the 50S ribosomal subunit. Forms a cluster with proteins L14 and L19. In terms of processing, methylated by PrmB.

Functionally, one of the primary rRNA binding proteins, it binds directly near the 3'-end of the 23S rRNA, where it nucleates assembly of the 50S subunit. This chain is Large ribosomal subunit protein uL3, found in Hamiltonella defensa subsp. Acyrthosiphon pisum (strain 5AT).